We begin with the raw amino-acid sequence, 177 residues long: MAIVQDKYAQSLFEVAQAQGVHESVRQDLVEIKEGLAGNKAFFAFAEDPKVSSEKRHAFVEATFSGVDKPLRNLLSILADKKQLALLPSIADYYTEHYNKFNNQQYMKVESVYALSSEELDEIGKAFIKRTGYKKLLIENVVNSTLIGGIRATIGTTVYDGSVANELTQLEKSFHKQ.

It belongs to the ATPase delta chain family. F-type ATPases have 2 components, F(1) - the catalytic core - and F(0) - the membrane proton channel. F(1) has five subunits: alpha(3), beta(3), gamma(1), delta(1), epsilon(1). F(0) has three main subunits: a(1), b(2) and c(10-14). The alpha and beta chains form an alternating ring which encloses part of the gamma chain. F(1) is attached to F(0) by a central stalk formed by the gamma and epsilon chains, while a peripheral stalk is formed by the delta and b chains.

The protein localises to the cell membrane. In terms of biological role, f(1)F(0) ATP synthase produces ATP from ADP in the presence of a proton or sodium gradient. F-type ATPases consist of two structural domains, F(1) containing the extramembraneous catalytic core and F(0) containing the membrane proton channel, linked together by a central stalk and a peripheral stalk. During catalysis, ATP synthesis in the catalytic domain of F(1) is coupled via a rotary mechanism of the central stalk subunits to proton translocation. Functionally, this protein is part of the stalk that links CF(0) to CF(1). It either transmits conformational changes from CF(0) to CF(1) or is implicated in proton conduction. The sequence is that of ATP synthase subunit delta from Macrococcus caseolyticus (strain JCSC5402) (Macrococcoides caseolyticum).